A 73-amino-acid chain; its full sequence is MPKKDGAIEIEGRVIEPLPNAMFRVELANGHKVLAHISGKMRQHYIRILPEDRVVVELSPYDLTRGRIVYRYK.

In terms of domain architecture, S1-like spans methionine 1 to lysine 73.

This sequence belongs to the IF-1 family. As to quaternary structure, component of the 30S ribosomal translation pre-initiation complex which assembles on the 30S ribosome in the order IF-2 and IF-3, IF-1 and N-formylmethionyl-tRNA(fMet); mRNA recruitment can occur at any time during PIC assembly.

The protein localises to the cytoplasm. Its function is as follows. One of the essential components for the initiation of protein synthesis. Stabilizes the binding of IF-2 and IF-3 on the 30S subunit to which N-formylmethionyl-tRNA(fMet) subsequently binds. Helps modulate mRNA selection, yielding the 30S pre-initiation complex (PIC). Upon addition of the 50S ribosomal subunit IF-1, IF-2 and IF-3 are released leaving the mature 70S translation initiation complex. In Salinispora arenicola (strain CNS-205), this protein is Translation initiation factor IF-1.